A 620-amino-acid chain; its full sequence is Chaperone protein HscA homolog (620 aa).

This sequence belongs to the heat shock protein 70 family.

Chaperone involved in the maturation of iron-sulfur cluster-containing proteins. Has a low intrinsic ATPase activity which is markedly stimulated by HscB. In Bordetella petrii (strain ATCC BAA-461 / DSM 12804 / CCUG 43448), this protein is Chaperone protein HscA homolog.